The primary structure comprises 475 residues: AAA-ATPase At1g43910 (475 aa).

Residues 11-28 form a helical membrane-spanning segment; it reads VSAVFSLYTSFSAITMLF. Position 85 is a phosphothreonine (T85). 246 to 253 is an ATP binding site; it reads GPPGTGKS. Disordered stretches follow at residues 306 to 328 and 453 to 475; these read SRRR…PQKR and KGED…EAET. A compositionally biased stretch (acidic residues) spans 457-467; it reads SSVEEEGEIED.

Belongs to the AAA ATPase family. BCS1 subfamily. Requires Mg(2+) as cofactor. In terms of tissue distribution, expressed in developing shoots.

The protein resides in the membrane. The catalysed reaction is ATP + H2O = ADP + phosphate + H(+). This chain is AAA-ATPase At1g43910, found in Arabidopsis thaliana (Mouse-ear cress).